Reading from the N-terminus, the 458-residue chain is ATP synthase subunit beta (458 aa).

148-155 (GGAGVGKT) provides a ligand contact to ATP.

The protein belongs to the ATPase alpha/beta chains family. F-type ATPases have 2 components, CF(1) - the catalytic core - and CF(0) - the membrane proton channel. CF(1) has five subunits: alpha(3), beta(3), gamma(1), delta(1), epsilon(1). CF(0) has three main subunits: a(1), b(2) and c(9-12). The alpha and beta chains form an alternating ring which encloses part of the gamma chain. CF(1) is attached to CF(0) by a central stalk formed by the gamma and epsilon chains, while a peripheral stalk is formed by the delta and b chains.

Its subcellular location is the cell inner membrane. The catalysed reaction is ATP + H2O + 4 H(+)(in) = ADP + phosphate + 5 H(+)(out). In terms of biological role, produces ATP from ADP in the presence of a proton gradient across the membrane. The catalytic sites are hosted primarily by the beta subunits. The chain is ATP synthase subunit beta from Pseudomonas entomophila (strain L48).